A 695-amino-acid chain; its full sequence is GATA zinc finger domain-containing protein 16 (695 aa).

Disordered stretches follow at residues 82-111, 134-304, and 422-472; these read SPIL…SNNA, VVNS…QQDK, and NNQF…KMRY. Low complexity-rich tracts occupy residues 87-111 and 140-149; these read SQQQ…SNNA and KTTTTNNKPP. The stretch at 150–174 forms a coiled coil; it reads KQSKRKEKERLEEEKQTVAQQQQYQ. A compositionally biased stretch (basic and acidic residues) spans 155-165; it reads KEKERLEEEKQ. Residues 199–209 show a composition bias toward polar residues; sequence VSTTPYGNSQF. Residues 210–298 are compositionally biased toward low complexity; that stretch reads NNNNNNNNNN…NSNSNNNNNN (89 aa). The span at 422-433 shows a compositional bias: polar residues; that stretch reads NNQFSGDKQSAL. The span at 434 to 446 shows a compositional bias: low complexity; that stretch reads NNVKNSKGGNTNN. The GATA-type zinc finger occupies 479–504; it reads CHTCGVTNTPEWRRGPNGAKTLCNAC. Residues 523-646 form a disordered region; that stretch reads NSTGVNITEP…TTNSITTPTT (124 aa). Low complexity-rich tracts occupy residues 544-556 and 564-646; these read DNNN…SDSN and GSNN…TPTT.

This chain is GATA zinc finger domain-containing protein 16 (gtaP), found in Dictyostelium discoideum (Social amoeba).